The following is a 63-amino-acid chain: MAEKKELKTYVHKLYEVDYEKGVIKLKNRRCPRCGSIMAHHMKPVERWHCGKCGYTEFVTKKK.

4 residues coordinate Zn(2+): Cys31, Cys34, Cys50, and Cys53.

The protein belongs to the eukaryotic ribosomal protein eS31 family. Part of the 30S ribosomal subunit. Requires Zn(2+) as cofactor.

In Aeropyrum pernix (strain ATCC 700893 / DSM 11879 / JCM 9820 / NBRC 100138 / K1), this protein is Small ribosomal subunit protein eS31 (rps27ae).